Here is a 1649-residue protein sequence, read N- to C-terminus: DNA-directed RNA polymerase subunit beta' (1649 aa).

The Zn(2+) site is built by C62, C64, C77, and C80. The Mg(2+) site is built by D746, D748, and D750. Residues C1077, C1268, C1275, and C1278 each coordinate Zn(2+).

This sequence belongs to the RNA polymerase beta' chain family. The RNAP catalytic core consists of 2 alpha, 1 beta, 1 beta' and 1 omega subunit. When a sigma factor is associated with the core the holoenzyme is formed, which can initiate transcription. Requires Mg(2+) as cofactor. It depends on Zn(2+) as a cofactor.

It carries out the reaction RNA(n) + a ribonucleoside 5'-triphosphate = RNA(n+1) + diphosphate. Its function is as follows. DNA-dependent RNA polymerase catalyzes the transcription of DNA into RNA using the four ribonucleoside triphosphates as substrates. This chain is DNA-directed RNA polymerase subunit beta', found in Thermosipho africanus (strain TCF52B).